The following is a 137-amino-acid chain: Large ribosomal subunit protein eL32 (137 aa).

Positions P95–S137 are disordered. Over residues R123–S137 the composition is skewed to basic residues.

It belongs to the eukaryotic ribosomal protein eL32 family.

The sequence is that of Large ribosomal subunit protein eL32 (rpl32) from Trichoderma harzianum (Hypocrea lixii).